Here is a 708-residue protein sequence, read N- to C-terminus: Transcriptional regulator nsrM (708 aa).

The zn(2)-C6 fungal-type DNA-binding region spans 37–63 (CVRCQQRKVRCDHKSPCGNCVASDSQC).

It is found in the nucleus. In terms of biological role, transcriptional regulator; part of the gene cluster that mediates the biosynthesis of the tetrahydroxanthone dimer neosartorin, which exhibits antibacterial activity. The chain is Transcriptional regulator nsrM from Aspergillus novofumigatus (strain IBT 16806).